A 245-amino-acid chain; its full sequence is Alpha carbonic anhydrase 2 (245 aa).

An N-terminal signal peptide occupies residues 1–23 (MDKISIRCFIFLVLTSFVTTVSC). In terms of domain architecture, Alpha-carbonic anhydrase spans 37–245 (HEFSYEWNQE…THRYFLLFFT (209 aa)). The cysteines at positions 62 and 222 are disulfide-linked. An N-linked (GlcNAc...) asparagine glycan is attached at asparagine 95. Histidine 103 serves as the catalytic Proton acceptor. N-linked (GlcNAc...) asparagine glycosylation is present at asparagine 120. Zn(2+)-binding residues include histidine 130, histidine 132, and histidine 149. Asparagine 156 is a glycosylation site (N-linked (GlcNAc...) asparagine). 218-219 (TT) is a binding site for substrate.

The protein belongs to the alpha-class carbonic anhydrase family. Zn(2+) is required as a cofactor. In terms of processing, N-glycosylated. As to expression, expressed in stems and roots.

The protein resides in the plastid. It localises to the chloroplast stroma. It carries out the reaction hydrogencarbonate + H(+) = CO2 + H2O. Functionally, reversible hydration of carbon dioxide. The polypeptide is Alpha carbonic anhydrase 2 (ACA2) (Arabidopsis thaliana (Mouse-ear cress)).